A 399-amino-acid chain; its full sequence is Protein shisa-8 (399 aa).

The N-terminal stretch at 1–36 (MERAGARGQRCGRRSHGLPLALRLALLLAGSPSGRA) is a signal peptide. The Extracellular segment spans residues 37 to 136 (GAPEEQEIAG…APRDPARERS (100 aa)). Asn-73 is a glycosylation site (N-linked (GlcNAc...) asparagine). A helical membrane pass occupies residues 137–157 (HTAVYAVCGVAALLVLVGIGA). At 158–399 (RLGLERAHSP…STNSKAEVTV (242 aa)) the chain is on the cytoplasmic side. 2 disordered regions span residues 207–248 (GDGV…GGSL) and 378–399 (FYSS…EVTV). Polar residues predominate over residues 389–399 (LSTNSKAEVTV).

This sequence belongs to the shisa family. In terms of assembly, interacts with AMPAR subunits GRIA1 and GRIA2. In terms of tissue distribution, brain-specific. Highly expressed in cerebellum and olfactory bulb.

The protein localises to the membrane. Functionally, may regulate trafficking and current kinetics of AMPA-type glutamate receptor (AMPAR) at synapses. This Mus musculus (Mouse) protein is Protein shisa-8.